The primary structure comprises 315 residues: Ninja-family protein 1 (315 aa).

3 disordered regions span residues 1 to 28 (MASR…AGEA), 68 to 142 (SLPG…AQEP), and 156 to 237 (DQGN…TGDL). The segment covering 99–108 (ERWRRREMQS) has biased composition (basic and acidic residues). Over residues 156 to 166 (DQGNPSSSMPE) the composition is skewed to polar residues. Low complexity-rich tracts occupy residues 184-197 (SSDN…QNKS) and 221-234 (LRTL…TTST).

The protein belongs to the Ninja family.

The protein localises to the nucleus. The polypeptide is Ninja-family protein 1 (AFP-A1) (Triticum aestivum (Wheat)).